A 717-amino-acid chain; its full sequence is Patatin-like phospholipase domain-containing protein AO090003000839 (717 aa).

A helical membrane pass occupies residues 87 to 107 (WPFLFIVFGWITVLGFAYALT). The PNPLA domain maps to 277–468 (LCLSGGATFA…RTDIPIRALN (192 aa)). Residues 308–312 (GTSGG) carry the GXSXG motif. Ser310 acts as the Nucleophile in catalysis. Asp455 serves as the catalytic Proton acceptor. A disordered region spans residues 620 to 696 (VSPAQSRRKR…STGNIFQEMR (77 aa)). The segment covering 639 to 658 (MVERLDHNLPDRQPDNKEDL) has biased composition (basic and acidic residues). A compositionally biased stretch (low complexity) spans 660 to 673 (DSSGIDSNVSSRDS).

It belongs to the PLPL family.

The protein localises to the membrane. Its function is as follows. Probable lipid hydrolase. This is Patatin-like phospholipase domain-containing protein AO090003000839 from Aspergillus oryzae (strain ATCC 42149 / RIB 40) (Yellow koji mold).